The primary structure comprises 184 residues: Ribosome-recycling factor (184 aa).

The protein belongs to the RRF family.

It is found in the cytoplasm. Responsible for the release of ribosomes from messenger RNA at the termination of protein biosynthesis. May increase the efficiency of translation by recycling ribosomes from one round of translation to another. The chain is Ribosome-recycling factor from Fervidobacterium nodosum (strain ATCC 35602 / DSM 5306 / Rt17-B1).